The chain runs to 481 residues: MGSISLPEKHHAVCIPYPAQGHINPMLKLAKILHHKGFHITFVNTEFNHKRLLKSRGPDALNGLPDFQFKTIPDGLPPSDVDATQDIPSLCESTTTRCLDPFRNLLAELNGPSSSQVPPVSCIVSDGVMSFTLEAAAELGVPEILFWTTSACGFLGYMHYAKLIEKGLTPLKDASYLSNGYLEQSLDWIPGMKDIRLKDLPSFLRTTNPDDYMVKFVLQETERAKKASAIILNTFQELEDDVINALSAILPPIYTIGPLQFLQKEVKDERLSVLGSNLWKEEPECLDWLDSKDPNSVVYVNFGSITVMTPGQLVEFAWGLANSKQTFLWIIRPDLVSGDSAILPPEFLEETKDRGLLASWCPQEQVLSHPAIGGFLTHSGWNSTLESICSGVPMICWPFFAEQQTNCWFCCTKWYNGLEIDNNVKRDEVESLVTELMVGEKGMDMKKKALEWKNKAEEAAKSSGGSSYSNLEKVVQVLLSK.

The active-site Proton acceptor is the H22. H22 contacts an anthocyanidin. D126 acts as the Charge relay in catalysis. Residues T148, Q363, H378, W381, N382, S383, and E386 each coordinate UDP-alpha-D-glucose. A401 contributes to the an anthocyanidin binding site. The UDP-alpha-D-glucose site is built by E402 and Q403.

This sequence belongs to the UDP-glycosyltransferase family. In terms of tissue distribution, ubiquitous. Very low expression in stems.

It carries out the reaction 7-deoxyloganetin + UDP-alpha-D-glucose = 7-deoxyloganin + UDP + H(+). Functionally, iridoid glucosyltransferase acting on genipin and 7-deoxyloganetin. No activity with 7-deoxyloganetic acid. Involved in geniposide biosynthesis. The chain is 7-deoxyloganetin glucosyltransferase (UGT85A24) from Gardenia jasminoides (Cape jasmine).